The sequence spans 321 residues: Protein APA1 (321 aa).

Residues 50–70 (SLIEKPERGQTPEGEDPLGKP) are disordered. Residue lysine 54 coordinates substrate. Threonine 60 carries the post-translational modification Phosphothreonine. Substrate is bound by residues 93–94 (NK), asparagine 145, and 151–154 (GSSL). Catalysis depends on histidine 158, which acts as the Nucleophile. Substrate is bound by residues glutamine 160, 273–275 (NST), methionine 280, and lysine 284.

The protein belongs to the ATP adenylyltransferase family. In terms of assembly, monomer. The cofactor is a divalent metal cation. The N-terminus is blocked.

Its subcellular location is the cytoplasm. It is found in the nucleus. The catalysed reaction is ADP + ATP + H(+) = P(1),P(4)-bis(5'-adenosyl) tetraphosphate + phosphate. The enzyme catalyses sulfate + ADP + H(+) = adenosine 5'-phosphosulfate + phosphate. In terms of biological role, ap4A phosphorylase catalyzes the phosphorolytic degradation of bis(5'-adenosyl) tetraphosphate (Ap4A) into ADP and ATP. Can also use other Np4N' nucleotides (where N and N' stand for A,C,G or U) as substrates with equal efficiency. Cannot catalyze the reverse reaction. Additionally, this enzyme can also catalyze the phosphorolytic degradation of adenosine 5'-phosphosulfate (AMPS) into ADP and sulfate, the reversible exchange reaction between inorganic phosphate and the beta-phosphate of a nucleoside diphosphate (NDP), and the synthesis of Ap4A from AMPS plus ATP. This is Protein APA1 from Saccharomyces cerevisiae (strain ATCC 204508 / S288c) (Baker's yeast).